Consider the following 368-residue polypeptide: DNA replication and repair protein RecF (368 aa).

30-37 contributes to the ATP binding site; sequence GKNGTGKT.

Belongs to the RecF family.

The protein resides in the cytoplasm. Functionally, the RecF protein is involved in DNA metabolism; it is required for DNA replication and normal SOS inducibility. RecF binds preferentially to single-stranded, linear DNA. It also seems to bind ATP. The sequence is that of DNA replication and repair protein RecF from Chloroherpeton thalassium (strain ATCC 35110 / GB-78).